A 289-amino-acid chain; its full sequence is Urease accessory protein UreD (289 aa).

It belongs to the UreD family. As to quaternary structure, ureD, UreF and UreG form a complex that acts as a GTP-hydrolysis-dependent molecular chaperone, activating the urease apoprotein by helping to assemble the nickel containing metallocenter of UreC. The UreE protein probably delivers the nickel.

Its subcellular location is the cytoplasm. Required for maturation of urease via the functional incorporation of the urease nickel metallocenter. The sequence is that of Urease accessory protein UreD from Cupriavidus necator (strain ATCC 17699 / DSM 428 / KCTC 22496 / NCIMB 10442 / H16 / Stanier 337) (Ralstonia eutropha).